Consider the following 982-residue polypeptide: NACHT, LRR and PYD domains-containing protein 4C (982 aa).

The Pyrin domain maps to 1-93; that stretch reads MASFFSDFGL…MERAGREIAG (93 aa). One can recognise an NACHT domain in the interval 148–471; the sequence is HMVFLQGAAG…FYLLKSHMDH (324 aa). 154–161 provides a ligand contact to ATP; that stretch reads GAAGIGKS. LRR repeat units follow at residues 594-617, 689-716, 746-773, 802-825, 827-844, 859-882, and 916-940; these read CSTL…HSYT, NQCL…VLSQ, SKML…LCHP, NKTL…VLCG, LSLP…YCLI, NQNL…LLCD, and CKTL…LFEA.

It belongs to the NLRP family.

Its function is as follows. May be involved in inflammation and recognition of cytosolic pathogen-associated molecular patterns (PAMPs) not intercepted by membrane-bound receptors. This is NACHT, LRR and PYD domains-containing protein 4C (Nlrp4c) from Mus musculus (Mouse).